The sequence spans 341 residues: N-(sulfonatooxy)alkenimidothioic acid sulfate-lyase (epithionitrile-forming) (341 aa).

Positions 1–24 are disordered; it reads MAPTLQGQWIKVGQKGGTGPGPRS. Kelch repeat units lie at residues 34–82, 87–133, 139–194, and 203–249; these read KLYS…VRMV, KIYI…FHSM, HVYV…VVQG, and ATSI…AHAV. Residues K46, R94, T129, F130, R157, G186, K211, and V244 each coordinate a (Z)-N-(sulfonatooxy)alkanimidothioate. The active-site Proton donor is R94. The active-site Proton donor is the R157. Positions 260, 264, and 268 each coordinate Fe(2+). W303 is a binding site for a (Z)-N-(sulfonatooxy)alkanimidothioate.

In terms of assembly, homodimer. Interacts with WRKY53. Requires Fe(2+) as cofactor. Expressed in epidermal cells of all above-ground organs except the anthers, in cambial cells of leaf and stem vascular bundles, and in glucosinolates rich S-cells found in stems just below the inflorescence. Absent from roots.

The protein resides in the cytoplasm. It is found in the nucleus. It catalyses the reaction a (Z)-N-(sulfonatooxy)alkenimidothioate = an epithionitrile + sulfate. It carries out the reaction a (Z)-N-(sulfonatooxy)alkanimidothioate = a nitrile + sulfur + sulfate. The enzyme catalyses (Z)-(indol-3-yl)-N-(sulfonatooxy)methanimidothioate = (indol-3-yl)acetonitrile + sulfur + sulfate. Its activity is regulated as follows. Not dependent on the presence of Fe(2+) although supplemental Fe(2+) increases nitriles formation. In terms of biological role, specifier protein that contributes to constitutive and herbivore-induced simple nitrile formation. Converts glucosinolates both to epithionitriles and to simple nitriles in the presence of myrosinase. Promotes the formation of epithionitriles after hydrolysis of alkenylglucosinolates containing a terminal double bond. Mediates indol-3-ylacetonitrile (IACN) production from indol-3-ylmethylglucosinolate (glucobrassicin). Triggers the production of 3,4-epithiobutylnitrile from 2-propenylisothiocyanate, product of 2-propenylglucosinolate (sinigrin) catalysis by myrosinase. Seems inactive toward benzylglucosinolate (glucotropaeolin). Acts as a negative regulator of senescence. The protein is N-(sulfonatooxy)alkenimidothioic acid sulfate-lyase (epithionitrile-forming) of Arabidopsis thaliana (Mouse-ear cress).